We begin with the raw amino-acid sequence, 757 residues long: Protein lsd90 (757 aa).

4 stretches are compositionally biased toward polar residues: residues 1–11 (MVGTINESMQN), 19–36 (TAQS…SSSK), 51–69 (TAGN…SKNL), and 94–118 (DTSN…STYE). Disordered regions lie at residues 1–131 (MVGT…SRSS), 224–244 (ERAR…EKQA), 589–633 (AQAE…KSKS), and 657–757 (AYVG…MSNK). A coiled-coil region spans residues 166–604 (DEKTLQDLLE…KVESEYNSVK (439 aa)). Basic and acidic residues predominate over residues 589-598 (AQAEQSKVES). Residues 619-632 (VTTNEPTDVSTKSK) are compositionally biased toward polar residues. Over residues 674 to 693 (STPSTLPTSASTNAAATTTT) the composition is skewed to low complexity. 718-725 (GTTGLGKS) contributes to the ATP binding site.

Functionally, may be involved in the metabolism of very long-chain fatty acid-containing phospholipids (VLCFA-PL). In Schizosaccharomyces pombe (strain 972 / ATCC 24843) (Fission yeast), this protein is Protein lsd90 (lsd90).